The sequence spans 145 residues: MRQTFMANESNIERKWYVIDAEGQTLGRLSSEVASILRGKNKVTYTPHVDTGDYVIIINAAKIELTGKKESDKIYYRHSNHPGGIKSVTAGELKRNNPERLLETSIKGMLPSSRLGEKQGKKLFVYGGAEHPHAAQQPENYELRG.

The protein belongs to the universal ribosomal protein uL13 family. Part of the 50S ribosomal subunit.

Functionally, this protein is one of the early assembly proteins of the 50S ribosomal subunit, although it is not seen to bind rRNA by itself. It is important during the early stages of 50S assembly. The polypeptide is Large ribosomal subunit protein uL13 (Staphylococcus haemolyticus (strain JCSC1435)).